We begin with the raw amino-acid sequence, 546 residues long: Chaperonin GroEL (546 aa).

ATP contacts are provided by residues 29-32 (TLGP), 86-90 (DGTTT), glycine 413, 476-478 (NAA), and aspartate 492. The interval 521-546 (RPDESGNDAGAGAQGMDPSMMGGGMM) is disordered.

Belongs to the chaperonin (HSP60) family. Forms a cylinder of 14 subunits composed of two heptameric rings stacked back-to-back. Interacts with the co-chaperonin GroES.

The protein localises to the cytoplasm. It carries out the reaction ATP + H2O + a folded polypeptide = ADP + phosphate + an unfolded polypeptide.. Functionally, together with its co-chaperonin GroES, plays an essential role in assisting protein folding. The GroEL-GroES system forms a nano-cage that allows encapsulation of the non-native substrate proteins and provides a physical environment optimized to promote and accelerate protein folding. The polypeptide is Chaperonin GroEL (Tetragenococcus halophilus (Pediococcus halophilus)).